A 943-amino-acid chain; its full sequence is Translation initiation factor IF-2 (943 aa).

2 disordered regions span residues 96–229 (FIKR…ERRR) and 243–352 (AAPK…QRQQ). Over residues 104 to 116 (DAPSDAAESAPSA) the composition is skewed to low complexity. 2 stretches are compositionally biased toward basic and acidic residues: residues 120–163 (ELVR…EERA) and 171–229 (AEKK…ERRR). A compositionally biased stretch (low complexity) spans 278–293 (ATGSGTGARAAAPSAP). Residues 313 to 323 (TTKKKEIKTRG) are compositionally biased toward basic and acidic residues. A tr-type G domain is found at 443–612 (SRAPVVTVMG…LLQAEVLELK (170 aa)). Residues 452-459 (GHVDHGKT) form a G1 region. 452–459 (GHVDHGKT) contributes to the GTP binding site. The segment at 477 to 481 (GITQH) is G2. The G3 stretch occupies residues 498–501 (DTPG). GTP contacts are provided by residues 498–502 (DTPGH) and 552–555 (TKAD). The tract at residues 552 to 555 (TKAD) is G4. The tract at residues 588 to 590 (SSK) is G5.

This sequence belongs to the TRAFAC class translation factor GTPase superfamily. Classic translation factor GTPase family. IF-2 subfamily.

Its subcellular location is the cytoplasm. Functionally, one of the essential components for the initiation of protein synthesis. Protects formylmethionyl-tRNA from spontaneous hydrolysis and promotes its binding to the 30S ribosomal subunits. Also involved in the hydrolysis of GTP during the formation of the 70S ribosomal complex. This chain is Translation initiation factor IF-2, found in Acidovorax sp. (strain JS42).